A 104-amino-acid polypeptide reads, in one-letter code: NADH-quinone oxidoreductase subunit K (104 aa).

Transmembrane regions (helical) follow at residues Val-4–Ala-24, Val-31–Phe-51, and Leu-67–Leu-87.

This sequence belongs to the complex I subunit 4L family. NDH-1 is composed of 14 different subunits. Subunits NuoA, H, J, K, L, M, N constitute the membrane sector of the complex.

It localises to the cell membrane. The catalysed reaction is a quinone + NADH + 5 H(+)(in) = a quinol + NAD(+) + 4 H(+)(out). NDH-1 shuttles electrons from NADH, via FMN and iron-sulfur (Fe-S) centers, to quinones in the respiratory chain. The immediate electron acceptor for the enzyme in this species is believed to be a menaquinone. Couples the redox reaction to proton translocation (for every two electrons transferred, four hydrogen ions are translocated across the cytoplasmic membrane), and thus conserves the redox energy in a proton gradient. This chain is NADH-quinone oxidoreductase subunit K, found in Bacillus cereus (strain ATCC 14579 / DSM 31 / CCUG 7414 / JCM 2152 / NBRC 15305 / NCIMB 9373 / NCTC 2599 / NRRL B-3711).